A 182-amino-acid chain; its full sequence is Dephospho-CoA kinase (182 aa).

Residues 4–182 (VVAITGGIGS…IINNDHKIMT (179 aa)) form the DPCK domain. Position 12 to 17 (12 to 17 (GSGKTT)) interacts with ATP.

This sequence belongs to the CoaE family.

The protein resides in the cytoplasm. It catalyses the reaction 3'-dephospho-CoA + ATP = ADP + CoA + H(+). It participates in cofactor biosynthesis; coenzyme A biosynthesis; CoA from (R)-pantothenate: step 5/5. In terms of biological role, catalyzes the phosphorylation of the 3'-hydroxyl group of dephosphocoenzyme A to form coenzyme A. The protein is Dephospho-CoA kinase of Aliivibrio fischeri (strain ATCC 700601 / ES114) (Vibrio fischeri).